The primary structure comprises 222 residues: Deoxyribose-phosphate aldolase (222 aa).

The Proton donor/acceptor role is filled by D89. The active-site Schiff-base intermediate with acetaldehyde is the K152. Catalysis depends on K181, which acts as the Proton donor/acceptor.

The protein belongs to the DeoC/FbaB aldolase family. DeoC type 1 subfamily.

Its subcellular location is the cytoplasm. It carries out the reaction 2-deoxy-D-ribose 5-phosphate = D-glyceraldehyde 3-phosphate + acetaldehyde. It participates in carbohydrate degradation; 2-deoxy-D-ribose 1-phosphate degradation; D-glyceraldehyde 3-phosphate and acetaldehyde from 2-deoxy-alpha-D-ribose 1-phosphate: step 2/2. In terms of biological role, catalyzes a reversible aldol reaction between acetaldehyde and D-glyceraldehyde 3-phosphate to generate 2-deoxy-D-ribose 5-phosphate. The protein is Deoxyribose-phosphate aldolase of Alkaliphilus oremlandii (strain OhILAs) (Clostridium oremlandii (strain OhILAs)).